The sequence spans 64 residues: Putative antitoxin VapB1 (64 aa).

Possibly the antitoxin component of a type II toxin-antitoxin (TA) system. Its cognate toxin is VapC1 (Potential). The polypeptide is Putative antitoxin VapB1 (vapB1) (Methanocaldococcus jannaschii (strain ATCC 43067 / DSM 2661 / JAL-1 / JCM 10045 / NBRC 100440) (Methanococcus jannaschii)).